A 244-amino-acid chain; its full sequence is MFSLKMRASRNGNHVSGAERLVNEEKIEKISSELIKRAMSHENGVPDFINLKIEKVTEKINKLKHLEIKTVHSTSKENSRNIARNLLKNELEKYYLKNGKDIEKIDELIDFAFKIIDAGNMRGAAILDLDGNRLENILERGIRVKNIDTTEELSEKILKDSSLTKRTVDAIAIATKVVNCGVISELCTSDNFSYTTGYVATNDGYFRILNLKDKGQVGGRVFFVENSKIDELYDKLENMPVIVY.

This sequence belongs to the BioW family. In terms of assembly, homodimer. Mg(2+) is required as a cofactor.

It catalyses the reaction heptanedioate + ATP + CoA = 6-carboxyhexanoyl-CoA + AMP + diphosphate. Its pathway is metabolic intermediate metabolism; pimeloyl-CoA biosynthesis; pimeloyl-CoA from pimelate: step 1/1. In terms of biological role, catalyzes the transformation of pimelate into pimeloyl-CoA with concomitant hydrolysis of ATP to AMP. The chain is 6-carboxyhexanoate--CoA ligase from Methanococcus maripaludis (strain C6 / ATCC BAA-1332).